We begin with the raw amino-acid sequence, 221 residues long: MRLILLGAPGAGKGTQAQFICEKFAIPQISTGDMLRAAVKAGTEFGVAAKKIMDAGGLVSDDIIIGLVKDRLTQPDCSKGYLFDGFPRTIPQAQAMKDAGVPIDYVLEIDVPFDAIIDRMGGRRVHPASGRTYHIKYNPPKVEGKDDVTGDALIQRDDDKEETVRKRLQVYDDQTRPLVEYYSSWAAQANAADKVKAPAYRKVSGTGSVEDITTSIFAQLK.

10 to 15 (GAGKGT) provides a ligand contact to ATP. An NMP region spans residues 30–59 (STGDMLRAAVKAGTEFGVAAKKIMDAGGLV). Residues Thr31, Arg36, 57 to 59 (GLV), 85 to 88 (GFPR), and Gln92 each bind AMP. The segment at 122-159 (GRRVHPASGRTYHIKYNPPKVEGKDDVTGDALIQRDDD) is LID. ATP is bound by residues Arg123 and 132-133 (TY). AMP contacts are provided by Arg156 and Arg167. Gly207 is an ATP binding site.

It belongs to the adenylate kinase family. In terms of assembly, monomer.

Its subcellular location is the cytoplasm. It catalyses the reaction AMP + ATP = 2 ADP. The protein operates within purine metabolism; AMP biosynthesis via salvage pathway; AMP from ADP: step 1/1. Catalyzes the reversible transfer of the terminal phosphate group between ATP and AMP. Plays an important role in cellular energy homeostasis and in adenine nucleotide metabolism. This chain is Adenylate kinase, found in Polynucleobacter asymbioticus (strain DSM 18221 / CIP 109841 / QLW-P1DMWA-1) (Polynucleobacter necessarius subsp. asymbioticus).